A 142-amino-acid chain; its full sequence is MGAQSLPPAWQLYLKDHRVSTFKNWPFLEGCACTPERMAAAGFIHCPTENEPDLAQCFFCFKELEGWEPDDDPIEEHKKHSSGCAFLSVKKQFEELTLSEFLKLDKERTKNKIAKETNNKQKEFEETAKKVRCAIEQLAALE.

The BIR repeat unit spans residues 18 to 88; the sequence is RVSTFKNWPF…KHSSGCAFLS (71 aa). Phosphoserine; by AURKC is present on Ser-20. Lys-23 is modified (N6-acetyllysine). Thr-34 is modified (phosphothreonine; by CDK1 and CDK15). Position 48 is a phosphothreonine (Thr-48). Residues Cys-57, Cys-60, His-77, and Cys-84 each contribute to the Zn(2+) site. N6-acetyllysine occurs at positions 90, 110, 112, and 115. Phosphothreonine; by AURKB is present on Thr-117. Lys-129 is modified (N6-acetyllysine).

This sequence belongs to the IAP family. In terms of assembly, monomer or homodimer. Exists as a homodimer in the apo state and as a monomer in the CPC-bound state. The monomer protects cells against apoptosis more efficiently than the dimer. Only the dimeric form is capable of enhancing tubulin stability in cells. When phosphorylated, interacts with LAMTOR5/HBXIP; the resulting complex binds pro-CASP9, as well as active CASP9, but much less efficiently. Component of the chromosomal passenger complex (CPC) composed of at least BIRC5/survivin, CDCA8/borealin, INCENP, AURKB or AURKC; in the complex forms a triple-helix bundle-based subcomplex with INCENP and CDCA8. Interacts with JTB. Interacts (via BIR domain) with histone H3 phosphorylated at 'Thr-3' (H3pT3). Interacts with EVI5. Interacts with GTP-bound RAN in both the S and M phases of the cell cycle. Interacts with USP9X. Interacts with tubulin. Interacts with BIRC2/c-IAP1. The acetylated form at Lys-129 interacts with STAT3. The monomeric form deacetylated at Lys-129 interacts with XPO1/CRM1. The monomeric form interacts with XIAP/BIRC4. Both the dimeric and monomeric form can interact with DIABLO/SMAC. Interacts with BIRC6/bruce. Interacts with FBXL7; this interaction facilitates the polyubiquitination and subsequent proteasomal degradation of BIRC5 by the SCF(FBXL7) E3 ubiquitin-protein ligase complex. Post-translationally, ubiquitinated by the Cul9-RING ubiquitin-protein ligase complex, leading to its degradation. Ubiquitination is required for centrosomal targeting. Deubiquitinated by USP35 or USP38; leading to stabilization. Acetylation at Lys-129 results in its homodimerization, while deacetylation promotes the formation of monomers which heterodimerize with XPO1/CRM1 which facilitates its nuclear export. The acetylated form represses STAT3 transactivation. The dynamic equilibrium between its acetylation and deacetylation at Lys-129 determines its interaction with XPO1/CRM1, its subsequent subcellular localization, and its ability to inhibit STAT3 transactivation. In terms of processing, in vitro phosphorylation at Thr-117 by AURKB prevents interaction with INCENP and localization to mitotic chromosomes. Phosphorylation at Thr-48 by CK2 is critical for its mitotic and anti-apoptotic activities. Phosphorylation at Thr-34 by CDK15 is critical for its anti-apoptotic activity. Phosphorylation at Ser-20 by AURKC is critical for regulation of proper chromosome alignment and segregation, and possibly cytokinesis.

Its subcellular location is the cytoplasm. The protein resides in the nucleus. The protein localises to the chromosome. It localises to the centromere. It is found in the cytoskeleton. Its subcellular location is the spindle. The protein resides in the kinetochore. The protein localises to the midbody. Multitasking protein that has dual roles in promoting cell proliferation and preventing apoptosis. Component of a chromosome passage protein complex (CPC) which is essential for chromosome alignment and segregation during mitosis and cytokinesis. Acts as an important regulator of the localization of this complex; directs CPC movement to different locations from the inner centromere during prometaphase to midbody during cytokinesis and participates in the organization of the center spindle by associating with polymerized microtubules. Involved in the recruitment of CPC to centromeres during early mitosis via association with histone H3 phosphorylated at 'Thr-3' (H3pT3) during mitosis. The complex with RAN plays a role in mitotic spindle formation by serving as a physical scaffold to help deliver the RAN effector molecule TPX2 to microtubules. May counteract a default induction of apoptosis in G2/M phase. The acetylated form represses STAT3 transactivation of target gene promoters. May play a role in neoplasia. Inhibitor of CASP3 and CASP7. Essential for the maintenance of mitochondrial integrity and function. The polypeptide is Baculoviral IAP repeat-containing protein 5 (BIRC5) (Bos taurus (Bovine)).